The following is a 240-amino-acid chain: 4-hydroxy-tetrahydrodipicolinate reductase (240 aa).

Residues 79 to 81 and 103 to 106 each bind NAD(+); these read ATT and SANM. His-135 (proton donor/acceptor) is an active-site residue. His-136 lines the (S)-2,3,4,5-tetrahydrodipicolinate pocket. The active-site Proton donor is Lys-139. 145 to 146 provides a ligand contact to (S)-2,3,4,5-tetrahydrodipicolinate; it reads GT.

Belongs to the DapB family.

It localises to the cytoplasm. The catalysed reaction is (S)-2,3,4,5-tetrahydrodipicolinate + NAD(+) + H2O = (2S,4S)-4-hydroxy-2,3,4,5-tetrahydrodipicolinate + NADH + H(+). It catalyses the reaction (S)-2,3,4,5-tetrahydrodipicolinate + NADP(+) + H2O = (2S,4S)-4-hydroxy-2,3,4,5-tetrahydrodipicolinate + NADPH + H(+). It participates in amino-acid biosynthesis; L-lysine biosynthesis via DAP pathway; (S)-tetrahydrodipicolinate from L-aspartate: step 4/4. In terms of biological role, catalyzes the conversion of 4-hydroxy-tetrahydrodipicolinate (HTPA) to tetrahydrodipicolinate. The polypeptide is 4-hydroxy-tetrahydrodipicolinate reductase (Staphylococcus aureus (strain MRSA252)).